A 356-amino-acid polypeptide reads, in one-letter code: GTPase Obg (356 aa).

The region spanning 1 to 159 (MKFLDQAKVY…RWIWLRLKLI (159 aa)) is the Obg domain. An OBG-type G domain is found at 160-328 (ADAGLVGLPN…ALYAIAQHLG (169 aa)). Residues 166-173 (GLPNAGKS), 191-195 (FTTLH), 213-216 (DIPG), 280-283 (NKID), and 309-311 (SGV) each bind GTP. Mg(2+) is bound by residues serine 173 and threonine 193. A disordered region spans residues 333–356 (DIPLPKPSNADEEDPDTDQPWSPV).

It belongs to the TRAFAC class OBG-HflX-like GTPase superfamily. OBG GTPase family. Monomer. Mg(2+) serves as cofactor.

It is found in the cytoplasm. In terms of biological role, an essential GTPase which binds GTP, GDP and possibly (p)ppGpp with moderate affinity, with high nucleotide exchange rates and a fairly low GTP hydrolysis rate. Plays a role in control of the cell cycle, stress response, ribosome biogenesis and in those bacteria that undergo differentiation, in morphogenesis control. The sequence is that of GTPase Obg from Hyphomonas neptunium (strain ATCC 15444).